We begin with the raw amino-acid sequence, 261 residues long: Small ribosomal subunit protein uS2 (261 aa).

This sequence belongs to the universal ribosomal protein uS2 family.

This is Small ribosomal subunit protein uS2 from Paracoccus denitrificans (strain Pd 1222).